A 330-amino-acid chain; its full sequence is 4-hydroxythreonine-4-phosphate dehydrogenase (330 aa).

Substrate-binding residues include His134 and Thr135. Residues His163, His208, and His263 each contribute to the a divalent metal cation site. Positions 271, 280, and 289 each coordinate substrate.

It belongs to the PdxA family. As to quaternary structure, homodimer. It depends on Zn(2+) as a cofactor. Requires Mg(2+) as cofactor. Co(2+) is required as a cofactor.

The protein localises to the cytoplasm. The enzyme catalyses 4-(phosphooxy)-L-threonine + NAD(+) = 3-amino-2-oxopropyl phosphate + CO2 + NADH. Its pathway is cofactor biosynthesis; pyridoxine 5'-phosphate biosynthesis; pyridoxine 5'-phosphate from D-erythrose 4-phosphate: step 4/5. In terms of biological role, catalyzes the NAD(P)-dependent oxidation of 4-(phosphooxy)-L-threonine (HTP) into 2-amino-3-oxo-4-(phosphooxy)butyric acid which spontaneously decarboxylates to form 3-amino-2-oxopropyl phosphate (AHAP). This chain is 4-hydroxythreonine-4-phosphate dehydrogenase, found in Methylococcus capsulatus (strain ATCC 33009 / NCIMB 11132 / Bath).